Consider the following 151-residue polypeptide: 3-hydroxyacyl-[acyl-carrier-protein] dehydratase FabZ (151 aa).

The active site involves His57.

It belongs to the thioester dehydratase family. FabZ subfamily.

It is found in the cytoplasm. It carries out the reaction a (3R)-hydroxyacyl-[ACP] = a (2E)-enoyl-[ACP] + H2O. Involved in unsaturated fatty acids biosynthesis. Catalyzes the dehydration of short chain beta-hydroxyacyl-ACPs and long chain saturated and unsaturated beta-hydroxyacyl-ACPs. This chain is 3-hydroxyacyl-[acyl-carrier-protein] dehydratase FabZ, found in Prochlorococcus marinus (strain SARG / CCMP1375 / SS120).